The sequence spans 92 residues: UPF0728 protein (92 aa).

The protein belongs to the UPF0728 family.

This Branchiostoma floridae (Florida lancelet) protein is UPF0728 protein.